The primary structure comprises 243 residues: Adenosine 5'-phosphosulfate reductase (243 aa).

It belongs to the PAPS reductase family. CysH subfamily. The cofactor is [4Fe-4S] cluster.

Its subcellular location is the cytoplasm. It catalyses the reaction [thioredoxin]-disulfide + sulfite + AMP + 2 H(+) = adenosine 5'-phosphosulfate + [thioredoxin]-dithiol. It participates in sulfur metabolism; hydrogen sulfide biosynthesis; sulfite from sulfate. Catalyzes the formation of sulfite from adenosine 5'-phosphosulfate (APS) using thioredoxin as an electron donor. This Staphylococcus haemolyticus (strain JCSC1435) protein is Adenosine 5'-phosphosulfate reductase.